The sequence spans 194 residues: Peptidyl-tRNA hydrolase (194 aa).

Tyr17 is a binding site for tRNA. His22 acts as the Proton acceptor in catalysis. 3 residues coordinate tRNA: Phe68, Asn70, and Asn116.

Belongs to the PTH family. Monomer.

The protein localises to the cytoplasm. The catalysed reaction is an N-acyl-L-alpha-aminoacyl-tRNA + H2O = an N-acyl-L-amino acid + a tRNA + H(+). Hydrolyzes ribosome-free peptidyl-tRNAs (with 1 or more amino acids incorporated), which drop off the ribosome during protein synthesis, or as a result of ribosome stalling. In terms of biological role, catalyzes the release of premature peptidyl moieties from peptidyl-tRNA molecules trapped in stalled 50S ribosomal subunits, and thus maintains levels of free tRNAs and 50S ribosomes. This Actinobacillus pleuropneumoniae serotype 5b (strain L20) protein is Peptidyl-tRNA hydrolase.